Consider the following 357-residue polypeptide: GTPase Obg (357 aa).

Residues 1–158 (MFVDNIKLKV…LEIVLELKLI (158 aa)) form the Obg domain. The region spanning 159-345 (ADVGLVGFPN…LKFALFDLVE (187 aa)) is the OBG-type G domain. Residues 165-172 (GFPNAGKS), 190-194 (FTTLT), 212-215 (DIPG), 280-283 (TKCD), and 326-328 (SSV) each bind GTP. 2 residues coordinate Mg(2+): Ser172 and Thr192.

This sequence belongs to the TRAFAC class OBG-HflX-like GTPase superfamily. OBG GTPase family. In terms of assembly, monomer. The cofactor is Mg(2+).

It is found in the cytoplasm. In terms of biological role, an essential GTPase which binds GTP, GDP and possibly (p)ppGpp with moderate affinity, with high nucleotide exchange rates and a fairly low GTP hydrolysis rate. Plays a role in control of the cell cycle, stress response, ribosome biogenesis and in those bacteria that undergo differentiation, in morphogenesis control. This chain is GTPase Obg, found in Nautilia profundicola (strain ATCC BAA-1463 / DSM 18972 / AmH).